A 342-amino-acid polypeptide reads, in one-letter code: Fructose-1,6-bisphosphatase class 1 (342 aa).

4 residues coordinate Mg(2+): Glu-97, Asp-119, Leu-121, and Asp-122. Substrate is bound by residues Asp-122–Ser-125, Asn-215, Tyr-247, and Lys-280. Glu-286 contacts Mg(2+).

It belongs to the FBPase class 1 family. As to quaternary structure, homotetramer. Mg(2+) is required as a cofactor.

The protein resides in the cytoplasm. The catalysed reaction is beta-D-fructose 1,6-bisphosphate + H2O = beta-D-fructose 6-phosphate + phosphate. It functions in the pathway carbohydrate biosynthesis; gluconeogenesis. The polypeptide is Fructose-1,6-bisphosphatase class 1 (Leptospira borgpetersenii serovar Hardjo-bovis (strain JB197)).